The following is a 651-amino-acid chain: Probable potassium transport system protein Kup (651 aa).

Helical transmembrane passes span 41 to 61 (LVLG…IYAF), 82 to 102 (VVSL…VLFV), 130 to 150 (LILG…VITP), 163 to 183 (IVAP…LVTL), 194 to 214 (VAIV…ASGL), 235 to 255 (FLTV…LAMT), 276 to 296 (WLWI…AFIL), 309 to 329 (MIPS…TVIA), 366 to 386 (IYIP…VLGF), 395 to 415 (AYGI…YIAM), 426 to 446 (ALPI…ANII), and 450 to 470 (EGGW…WTWV).

The protein belongs to the HAK/KUP transporter (TC 2.A.72) family.

The protein localises to the cell inner membrane. It carries out the reaction K(+)(in) + H(+)(in) = K(+)(out) + H(+)(out). Transport of potassium into the cell. Likely operates as a K(+):H(+) symporter. The chain is Probable potassium transport system protein Kup from Brucella abortus (strain S19).